The following is a 585-amino-acid chain: Isocitrate dehydrogenase kinase/phosphatase (585 aa).

ATP contacts are provided by residues 315–321 and lysine 336; that span reads APGVKGM. Residue aspartate 371 is part of the active site.

Belongs to the AceK family.

The protein localises to the cytoplasm. The catalysed reaction is L-seryl-[isocitrate dehydrogenase] + ATP = O-phospho-L-seryl-[isocitrate dehydrogenase] + ADP + H(+). Its function is as follows. Bifunctional enzyme which can phosphorylate or dephosphorylate isocitrate dehydrogenase (IDH) on a specific serine residue. This is a regulatory mechanism which enables bacteria to bypass the Krebs cycle via the glyoxylate shunt in response to the source of carbon. When bacteria are grown on glucose, IDH is fully active and unphosphorylated, but when grown on acetate or ethanol, the activity of IDH declines drastically concomitant with its phosphorylation. In Photorhabdus laumondii subsp. laumondii (strain DSM 15139 / CIP 105565 / TT01) (Photorhabdus luminescens subsp. laumondii), this protein is Isocitrate dehydrogenase kinase/phosphatase.